The primary structure comprises 298 residues: Leucine-rich repeat-containing protein 55 (298 aa).

A signal peptide spans 1 to 34 (MGDTWAQLPWPGPPHSALLLVFFLLAAGVMHSDA). Residues 35–65 (GTSCPVLCTCRNQVVDCSNQRLFSVPPDLPM) enclose the LRRNT domain. 2 disulfides stabilise this stretch: Cys-38-Cys-44 and Cys-42-Cys-51. 5 LRR repeats span residues 66–87 (DTRNLSLAHNRIAAVPPGYLTC), 90–111 (ELRVLDLRNNSLMELPPGLFLH), 114–135 (RLAHLDLSYNNLSHVPADMFRE), 138–160 (GLVHIDLSHNPWLRRVHPQAFQG), and 163–186 (HLRDLDLSYGGLAFLSLEALEGLP). In terms of domain architecture, LRRCT spans 196–251 (NPWVCGCTMEPLLKWLRNRIQRCTADSQLAECRGPPEVEGAPLFSLTEESFKACHL). Disulfide bonds link Cys-200–Cys-227 and Cys-202–Cys-249. Residues 259 to 279 (LFIAFVGFVVSIASVATNFLL) form a helical membrane-spanning segment.

Interacts with KCNMA1.

The protein localises to the cell membrane. Functionally, auxiliary protein of the large-conductance, voltage and calcium-activated potassium channel (BK alpha). Modulates gating properties by producing a marked shift in the BK channel's voltage dependence of activation in the hyperpolarizing direction, and in the absence of calcium. This chain is Leucine-rich repeat-containing protein 55 (Lrrc55), found in Mus musculus (Mouse).